The sequence spans 72 residues: ATP synthase subunit c (72 aa).

Helical transmembrane passes span 1–21 and 49–69; these read MSLG…GAGI and FIGV…AFIV.

This sequence belongs to the ATPase C chain family. As to quaternary structure, F-type ATPases have 2 components, F(1) - the catalytic core - and F(0) - the membrane proton channel. F(1) has five subunits: alpha(3), beta(3), gamma(1), delta(1), epsilon(1). F(0) has three main subunits: a(1), b(2) and c(10-14). The alpha and beta chains form an alternating ring which encloses part of the gamma chain. F(1) is attached to F(0) by a central stalk formed by the gamma and epsilon chains, while a peripheral stalk is formed by the delta and b chains.

The protein localises to the cell membrane. In terms of biological role, f(1)F(0) ATP synthase produces ATP from ADP in the presence of a proton or sodium gradient. F-type ATPases consist of two structural domains, F(1) containing the extramembraneous catalytic core and F(0) containing the membrane proton channel, linked together by a central stalk and a peripheral stalk. During catalysis, ATP synthesis in the catalytic domain of F(1) is coupled via a rotary mechanism of the central stalk subunits to proton translocation. Functionally, key component of the F(0) channel; it plays a direct role in translocation across the membrane. A homomeric c-ring of between 10-14 subunits forms the central stalk rotor element with the F(1) delta and epsilon subunits. The sequence is that of ATP synthase subunit c from Bacillus anthracis (strain A0248).